A 256-amino-acid chain; its full sequence is 2,3,4,5-tetrahydropyridine-2,6-dicarboxylate N-acetyltransferase (256 aa).

This sequence belongs to the transferase hexapeptide repeat family. DapH subfamily.

It catalyses the reaction (S)-2,3,4,5-tetrahydrodipicolinate + acetyl-CoA + H2O = L-2-acetamido-6-oxoheptanedioate + CoA. It functions in the pathway amino-acid biosynthesis; L-lysine biosynthesis via DAP pathway; LL-2,6-diaminopimelate from (S)-tetrahydrodipicolinate (acetylase route): step 1/3. Functionally, catalyzes the transfer of an acetyl group from acetyl-CoA to tetrahydrodipicolinate. This chain is 2,3,4,5-tetrahydropyridine-2,6-dicarboxylate N-acetyltransferase, found in Lactococcus lactis subsp. cremoris (strain MG1363).